Here is a 333-residue protein sequence, read N- to C-terminus: Alpha-N-acetylgalactosaminide alpha-2,6-sialyltransferase 6 (333 aa).

Residues 1–12 (MACSRPPSQCDP) show a composition bias toward polar residues. Positions 1–27 (MACSRPPSQCDPTTLPPGPPAGRWPLP) are disordered. At 1–43 (MACSRPPSQCDPTTLPPGPPAGRWPLPFSRRRREMSSNKEQRS) the chain is on the cytoplasmic side. Residues 44–64 (AVFVILFALITILILYSSNSA) traverse the membrane as a helical; Signal-anchor for type II membrane protein segment. At 65–333 (NEVFHYGSLR…GITFSHPSWT (269 aa)) the chain is on the lumenal side. The N-linked (GlcNAc...) asparagine glycan is linked to Asn98. Cys108 and Cys256 are joined by a disulfide.

It belongs to the glycosyltransferase 29 family. As to expression, widely expressed, the gene expression is most abundant in colon, brain, liver, and heart.

It is found in the golgi apparatus membrane. It carries out the reaction a ganglioside GM1b (d18:1(4E)) + CMP-N-acetyl-beta-neuraminate = a ganglioside GD1alpha (d18:1(4E)) + CMP + H(+). It catalyses the reaction a ganglioside GD1a (d18:1(4E)) + CMP-N-acetyl-beta-neuraminate = a ganglioside GT1aalpha (d18:1(4E)) + CMP + H(+). The catalysed reaction is a ganglioside GT1b (d18:1(4E)) + CMP-N-acetyl-beta-neuraminate = a ganglioside GQ1balpha (d18:1(4E)) + CMP + H(+). The enzyme catalyses N-acetyl-alpha-neuraminosyl-(2-&gt;3)-beta-D-galactosyl-(1-&gt;3)-N-acetyl-beta-D-glucosaminyl-(1-&gt;3)-beta-D-galactosyl-(1-&gt;4)-beta-D-glucosyl-(1&lt;-&gt;1')-N-acyl-sphing-4-enine + CMP-N-acetyl-beta-neuraminate = N-acetyl-alpha-neuraminosyl-(2-&gt;3)-beta-D-galactosyl-(1-&gt;3)-[N-acetyl-alpha-neuraminosyl-(2-&gt;6)]-N-acetyl-beta-D-glucosaminyl-(1-&gt;3)-beta-D-galactosyl-(1-&gt;4)-beta-D-glucosyl-(1&lt;-&gt;1')-N-acyl-sphing-4-enine + CMP + H(+). It carries out the reaction a globoside MSGG + CMP-N-acetyl-beta-neuraminate = a globoside DSGG + CMP + H(+). It catalyses the reaction 3-O-[alpha-Neu5Ac-(2-&gt;3)-beta-D-Gal-(1-&gt;3)-alpha-D-GalNAc]-L-Ser-[protein] + CMP-N-acetyl-beta-neuraminate = a 3-O-{alpha-Neu5Ac-(2-&gt;3)-beta-D-Gal-(1-&gt;3)-[alpha-Neu5Ac-(2-&gt;6)]-alpha-D-GalNAc}-L-seryl-[protein] + CMP + H(+). The catalysed reaction is 3-O-[alpha-Neu5Ac-(2-&gt;3)-beta-D-Gal-(1-&gt;3)-alpha-D-GalNAc]-L-Thr-[protein] + CMP-N-acetyl-beta-neuraminate = a 3-O-{alpha-Neu5Ac-(2-&gt;3)-beta-D-Gal-(1-&gt;3)-[alpha-Neu5Ac-(2-&gt;6)]-alpha-D-GalNAc}-L-threonyl-[protein] + CMP + H(+). Its function is as follows. Transfers the sialyl group (N-acetyl-alpha-neuraminyl or NeuAc) from CMP-NeuAc onto glycolipids, forming an alpha-2,6-linkage. Produces branched type disialyl structures by transfer of a sialyl group onto the GalNAc or GlcNAc residue inside backbone core chains having a terminal sialic acid with an alpha-2,3-linkage on Gal. ST6GalNAcVI prefers glycolipids to glycoproteins, predominantly catalyzing the biosynthesis of ganglioside GD1alpha from GM1b. Also has activity toward GD1a and GT1b, and can generate DSGG (disialylgalactosylgloboside) from MSGG (monosialylgalactosylgloboside). Besides GMb1, MSGG and other glycolipids, it shows activity towards sialyl Lc4Cer generating disialyl Lc4Cer, which can lead to the synthesis of disialyl Lewis a (Le(a)), suggested to be a cancer-associated antigen. This chain is Alpha-N-acetylgalactosaminide alpha-2,6-sialyltransferase 6 (St6galnac6), found in Mus musculus (Mouse).